We begin with the raw amino-acid sequence, 227 residues long: Cytochrome c oxidase subunit 2 (227 aa).

At 1–14 (MAYPFQLGFQDATS) the chain is on the mitochondrial intermembrane side. The chain crosses the membrane as a helical span at residues 15–45 (PIMEELLHFHDHTLMIVFLISSLVLYIITLM). The Mitochondrial matrix portion of the chain corresponds to 46–59 (LTTKLTHTSTMDAQ). A helical membrane pass occupies residues 60–87 (EVETVWTILPAIILILIALPSLRILYMM). At 88–227 (DEVNNPSLTV…FFEKWSASML (140 aa)) the chain is on the mitochondrial intermembrane side. 6 residues coordinate Cu cation: His161, Cys196, Glu198, Cys200, His204, and Met207. Residue Glu198 coordinates Mg(2+).

Belongs to the cytochrome c oxidase subunit 2 family. As to quaternary structure, component of the cytochrome c oxidase (complex IV, CIV), a multisubunit enzyme composed of 14 subunits. The complex is composed of a catalytic core of 3 subunits MT-CO1, MT-CO2 and MT-CO3, encoded in the mitochondrial DNA, and 11 supernumerary subunits COX4I, COX5A, COX5B, COX6A, COX6B, COX6C, COX7A, COX7B, COX7C, COX8 and NDUFA4, which are encoded in the nuclear genome. The complex exists as a monomer or a dimer and forms supercomplexes (SCs) in the inner mitochondrial membrane with NADH-ubiquinone oxidoreductase (complex I, CI) and ubiquinol-cytochrome c oxidoreductase (cytochrome b-c1 complex, complex III, CIII), resulting in different assemblies (supercomplex SCI(1)III(2)IV(1) and megacomplex MCI(2)III(2)IV(2)). Found in a complex with TMEM177, COA6, COX18, COX20, SCO1 and SCO2. Interacts with TMEM177 in a COX20-dependent manner. Interacts with COX20. Interacts with COX16. It depends on Cu cation as a cofactor.

Its subcellular location is the mitochondrion inner membrane. It catalyses the reaction 4 Fe(II)-[cytochrome c] + O2 + 8 H(+)(in) = 4 Fe(III)-[cytochrome c] + 2 H2O + 4 H(+)(out). Component of the cytochrome c oxidase, the last enzyme in the mitochondrial electron transport chain which drives oxidative phosphorylation. The respiratory chain contains 3 multisubunit complexes succinate dehydrogenase (complex II, CII), ubiquinol-cytochrome c oxidoreductase (cytochrome b-c1 complex, complex III, CIII) and cytochrome c oxidase (complex IV, CIV), that cooperate to transfer electrons derived from NADH and succinate to molecular oxygen, creating an electrochemical gradient over the inner membrane that drives transmembrane transport and the ATP synthase. Cytochrome c oxidase is the component of the respiratory chain that catalyzes the reduction of oxygen to water. Electrons originating from reduced cytochrome c in the intermembrane space (IMS) are transferred via the dinuclear copper A center (CU(A)) of subunit 2 and heme A of subunit 1 to the active site in subunit 1, a binuclear center (BNC) formed by heme A3 and copper B (CU(B)). The BNC reduces molecular oxygen to 2 water molecules using 4 electrons from cytochrome c in the IMS and 4 protons from the mitochondrial matrix. This Balaenoptera musculus (Blue whale) protein is Cytochrome c oxidase subunit 2 (MT-CO2).